The sequence spans 938 residues: Cyclin-dependent kinase-like 5 (938 aa).

One can recognise a Protein kinase domain in the interval 13 to 297; that stretch reads FEILGVVGEG…TEQCLNHPTF (285 aa). ATP is bound by residues 19–27 and K42; that span reads VGEGAYGVV. Catalysis depends on D135, which acts as the Proton acceptor. 4 disordered regions span residues 298 to 348, 382 to 566, 646 to 865, and 877 to 938; these read QTQR…DIQN, KTYQ…RHSK, SPQP…LTAQ, and HPLS…KWKQ. Polar residues-rich tracts occupy residues 319–331 and 382–402; these read ESST…QSTK and KTYQ…NNNI. Phosphoserine is present on S407. A compositionally biased stretch (basic and acidic residues) spans 407-417; that stretch reads SPKEAKSKTEF. Composition is skewed to polar residues over residues 434–462, 473–482, and 494–548; these read LKSS…QPSE, IPQSSRSPSY, and DSKS…SGRN. S479 bears the Phosphoserine mark. 2 stretches are compositionally biased toward basic and acidic residues: residues 549–559 and 679–704; these read NRNEGTLDSRR and QKSE…RHLY. S720 is subject to Phosphoserine. A compositionally biased stretch (polar residues) spans 728–748; sequence HENNVSTRVSSLPSDSSSGTN. S761 bears the Phosphoserine mark. Composition is skewed to basic and acidic residues over residues 769-778 and 817-827; these read DQLKEKEKQG and RPKEWRPEKLS. Residues 880–891 are compositionally biased toward polar residues; it reads SQATGGSSNIRQ.

It belongs to the protein kinase superfamily. CMGC Ser/Thr protein kinase family. CDC2/CDKX subfamily. As to quaternary structure, interacts with MECP2. Autophosphorylated.

The protein resides in the nucleus. Its subcellular location is the cytoplasm. The protein localises to the cytoskeleton. It is found in the cilium basal body. It localises to the microtubule organizing center. The protein resides in the centrosome. It catalyses the reaction L-seryl-[protein] + ATP = O-phospho-L-seryl-[protein] + ADP + H(+). The catalysed reaction is L-threonyl-[protein] + ATP = O-phospho-L-threonyl-[protein] + ADP + H(+). Mediates phosphorylation of MECP2. May regulate ciliogenesis. In Mus musculus (Mouse), this protein is Cyclin-dependent kinase-like 5.